The chain runs to 227 residues: 2,3-bisphosphoglycerate-dependent phosphoglycerate mutase (227 aa).

Substrate is bound by residues 8–15 (RHGKSVWN), 21–22 (TG), R58, 110–113 (ERMY), K121, 137–138 (RR), and 181–182 (GN). H9 functions as the Tele-phosphohistidine intermediate in the catalytic mechanism. Catalysis depends on E110, which acts as the Proton donor/acceptor.

The protein belongs to the phosphoglycerate mutase family. BPG-dependent PGAM subfamily.

It catalyses the reaction (2R)-2-phosphoglycerate = (2R)-3-phosphoglycerate. It participates in carbohydrate degradation; glycolysis; pyruvate from D-glyceraldehyde 3-phosphate: step 3/5. Its function is as follows. Catalyzes the interconversion of 2-phosphoglycerate and 3-phosphoglycerate. The protein is 2,3-bisphosphoglycerate-dependent phosphoglycerate mutase of Chlamydia abortus (strain DSM 27085 / S26/3) (Chlamydophila abortus).